A 570-amino-acid chain; its full sequence is Proline--tRNA ligase (570 aa).

It belongs to the class-II aminoacyl-tRNA synthetase family. ProS type 1 subfamily. Homodimer.

It localises to the cytoplasm. The catalysed reaction is tRNA(Pro) + L-proline + ATP = L-prolyl-tRNA(Pro) + AMP + diphosphate. Its function is as follows. Catalyzes the attachment of proline to tRNA(Pro) in a two-step reaction: proline is first activated by ATP to form Pro-AMP and then transferred to the acceptor end of tRNA(Pro). As ProRS can inadvertently accommodate and process non-cognate amino acids such as alanine and cysteine, to avoid such errors it has two additional distinct editing activities against alanine. One activity is designated as 'pretransfer' editing and involves the tRNA(Pro)-independent hydrolysis of activated Ala-AMP. The other activity is designated 'posttransfer' editing and involves deacylation of mischarged Ala-tRNA(Pro). The misacylated Cys-tRNA(Pro) is not edited by ProRS. The protein is Proline--tRNA ligase of Neisseria meningitidis serogroup B (strain ATCC BAA-335 / MC58).